We begin with the raw amino-acid sequence, 410 residues long: MGSSVYITVELAIAVLAILGNVLVCWAVWINSNLQNVTNFFVVSLAAADIAVGVLAIPFAITISTGFCAACHGCLFFACFVLVLTQSSIFSLLAIAIDRYIAIRIPLRYNGLVTGVRAKGIIAICWVLSFAIGLTPMLGWNNCSQKDGNSTKTCGEGRVTCLFEDVVPMNYMVYYNFFAFVLLPLLLMLAIYLRIFLAARRQLKQMESQPLPGERTRSTLQKEVHAAKSLAIIVGLFALCWLPLHIINCFTFFCSTCRHAPPWLMYLAIILSHSNSVVNPFIYAYRIREFRQTFRKIIRTHVLRRQEPFQAGGSSAWALAAHSTEGEQVSLRLNGHPLGVWANGSATHSGRRPNGYTLGLGGGGSAQGSPRDVELPTQERQEGQEHPGLRGHLVQARVGASSWSSEFAPS.

At 1–4 the chain is on the extracellular side; it reads MGSS. A helical transmembrane segment spans residues 5 to 29; it reads VYITVELAIAVLAILGNVLVCWAVW. Topologically, residues 30-39 are cytoplasmic; that stretch reads INSNLQNVTN. The chain crosses the membrane as a helical span at residues 40-63; the sequence is FFVVSLAAADIAVGVLAIPFAITI. Over 64–74 the chain is Extracellular; the sequence is STGFCAACHGC. 3 cysteine pairs are disulfide-bonded: C68-C154, C71-C143, and C74-C161. A helical membrane pass occupies residues 75 to 97; it reads LFFACFVLVLTQSSIFSLLAIAI. The Cytoplasmic segment spans residues 98–117; that stretch reads DRYIAIRIPLRYNGLVTGVR. The helical transmembrane segment at 118-140 threads the bilayer; the sequence is AKGIIAICWVLSFAIGLTPMLGW. The Extracellular segment spans residues 141 to 168; it reads NNCSQKDGNSTKTCGEGRVTCLFEDVVP. N-linked (GlcNAc...) asparagine glycosylation is found at N142 and N149. E164 lines the adenosine pocket. Residues 169 to 193 form a helical membrane-spanning segment; sequence MNYMVYYNFFAFVLLPLLLMLAIYL. Residues 194–229 are Cytoplasmic-facing; sequence RIFLAARRQLKQMESQPLPGERTRSTLQKEVHAAKS. The chain crosses the membrane as a helical span at residues 230 to 253; sequence LAIIVGLFALCWLPLHIINCFTFF. Position 248 (N248) interacts with adenosine. C254 and C257 are joined by a disulfide. Topologically, residues 254–261 are extracellular; it reads CSTCRHAP. Residues 262 to 285 traverse the membrane as a helical segment; the sequence is PWLMYLAIILSHSNSVVNPFIYAY. Adenosine contacts are provided by S272 and H273. Residues 286–410 are Cytoplasmic-facing; sequence RIREFRQTFR…SSWSSEFAPS (125 aa). The interaction with GAS2L2 stretch occupies residues 322 to 410; sequence HSTEGEQVSL…SSWSSEFAPS (89 aa). Residues 344–410 are disordered; the sequence is GSATHSGRRP…SSWSSEFAPS (67 aa). Residues 371–388 show a composition bias toward basic and acidic residues; that stretch reads RDVELPTQERQEGQEHPG. A compositionally biased stretch (polar residues) spans 401–410; that stretch reads SSWSSEFAPS.

Belongs to the G-protein coupled receptor 1 family. As to quaternary structure, interacts (via cytoplasmic C-terminal domain) with USP4; the interaction is direct. May interact with DRD4. Interacts with NECAB2. Interacts (via cytoplasmic C-terminal domain) with GAS2L2; interaction enhances receptor-mediated adenylyl cyclase activity. Ubiquitinated. Deubiquitinated by USP4; leading to stabilization and expression at the cell surface. Expressed in striatal neurons (at protein level).

The protein localises to the cell membrane. Its function is as follows. Receptor for adenosine. The activity of this receptor is mediated by G proteins which activate adenylyl cyclase. In Rattus norvegicus (Rat), this protein is Adenosine receptor A2a (Adora2a).